Reading from the N-terminus, the 46-residue chain is Cystatin WCPI-3 (46 aa).

The Secondary area of contact signature appears at 35–38 (VVAG).

This sequence belongs to the cystatin family. Phytocystatin subfamily.

In terms of biological role, inhibitor of papain. The sequence is that of Cystatin WCPI-3 from Wisteria floribunda (Japanese wisteria).